A 39-amino-acid chain; its full sequence is uncharacterized protein (39 aa).

Over residues 1–16 the composition is skewed to polar residues; sequence MLNIQPTQSIVNNQPK. Residues 1-39 form a disordered region; sequence MLNIQPTQSIVNNQPKSDQKKQKPADLLKEFYDKTGNRN. The span at 17-39 shows a compositional bias: basic and acidic residues; that stretch reads SDQKKQKPADLLKEFYDKTGNRN.

This is an uncharacterized protein from Dictyostelium discoideum (Social amoeba).